We begin with the raw amino-acid sequence, 515 residues long: Protein nucleotidyltransferase YdiU (515 aa).

Residues Gly101, Gly103, Arg104, Lys124, Asp136, Gly137, Arg194, and Arg201 each coordinate ATP. The active-site Proton acceptor is the Asp269. Mg(2+) is bound by residues Asn270 and Asp279. ATP is bound at residue Asp279.

The protein belongs to the SELO family. The cofactor is Mg(2+). Requires Mn(2+) as cofactor.

It catalyses the reaction L-seryl-[protein] + ATP = 3-O-(5'-adenylyl)-L-seryl-[protein] + diphosphate. It carries out the reaction L-threonyl-[protein] + ATP = 3-O-(5'-adenylyl)-L-threonyl-[protein] + diphosphate. The catalysed reaction is L-tyrosyl-[protein] + ATP = O-(5'-adenylyl)-L-tyrosyl-[protein] + diphosphate. The enzyme catalyses L-histidyl-[protein] + UTP = N(tele)-(5'-uridylyl)-L-histidyl-[protein] + diphosphate. It catalyses the reaction L-seryl-[protein] + UTP = O-(5'-uridylyl)-L-seryl-[protein] + diphosphate. It carries out the reaction L-tyrosyl-[protein] + UTP = O-(5'-uridylyl)-L-tyrosyl-[protein] + diphosphate. Nucleotidyltransferase involved in the post-translational modification of proteins. It can catalyze the addition of adenosine monophosphate (AMP) or uridine monophosphate (UMP) to a protein, resulting in modifications known as AMPylation and UMPylation. The protein is Protein nucleotidyltransferase YdiU of Cytophaga hutchinsonii (strain ATCC 33406 / DSM 1761 / CIP 103989 / NBRC 15051 / NCIMB 9469 / D465).